The sequence spans 122 residues: Small ribosomal subunit protein uS13 (122 aa).

The disordered stretch occupies residues 99–122 (RGQRTHTNARTRKGPAKAIAGKKK).

It belongs to the universal ribosomal protein uS13 family. As to quaternary structure, part of the 30S ribosomal subunit. Forms a loose heterodimer with protein S19. Forms two bridges to the 50S subunit in the 70S ribosome.

Its function is as follows. Located at the top of the head of the 30S subunit, it contacts several helices of the 16S rRNA. In the 70S ribosome it contacts the 23S rRNA (bridge B1a) and protein L5 of the 50S subunit (bridge B1b), connecting the 2 subunits; these bridges are implicated in subunit movement. Contacts the tRNAs in the A and P-sites. This chain is Small ribosomal subunit protein uS13, found in Cereibacter sphaeroides (strain ATCC 17025 / ATH 2.4.3) (Rhodobacter sphaeroides).